An 83-amino-acid chain; its full sequence is Putative defensin-like protein 111 (83 aa).

The signal sequence occupies residues 1 to 24; it reads MAITKKILLPFVLTILFVISSVHC. Intrachain disulfides connect cysteine 40/cysteine 80, cysteine 46/cysteine 69, cysteine 54/cysteine 78, and cysteine 58/cysteine 79.

This sequence belongs to the DEFL family.

Its subcellular location is the secreted. This chain is Putative defensin-like protein 111 (LCR50), found in Arabidopsis thaliana (Mouse-ear cress).